The chain runs to 311 residues: Protease HtpX homolog 1 (311 aa).

The next 2 helical transmembrane spans lie at 12-32 and 35-55; these read IIAL…IINF and FPVI…WLIS. His137 is a Zn(2+) binding site. The active site involves Glu138. A Zn(2+)-binding site is contributed by His141. Transmembrane regions (helical) follow at residues 159-179 and 184-204; these read ILGF…IFAV and ILVG…TFFL. Glu216 is a binding site for Zn(2+).

Belongs to the peptidase M48B family. Zn(2+) serves as cofactor.

The protein localises to the cell membrane. The protein is Protease HtpX homolog 1 of Sulfurisphaera tokodaii (strain DSM 16993 / JCM 10545 / NBRC 100140 / 7) (Sulfolobus tokodaii).